Here is a 702-residue protein sequence, read N- to C-terminus: Polyribonucleotide nucleotidyltransferase (702 aa).

Mg(2+) contacts are provided by aspartate 485 and aspartate 491. The KH domain occupies 552 to 612 (PRTEIICIDP…EGVKKAISII (61 aa)). The S1 motif domain maps to 622-690 (GEIYLGKVTK…NQGRINLSRK (69 aa)).

It belongs to the polyribonucleotide nucleotidyltransferase family. Mg(2+) is required as a cofactor.

It is found in the cytoplasm. The catalysed reaction is RNA(n+1) + phosphate = RNA(n) + a ribonucleoside 5'-diphosphate. Involved in mRNA degradation. Catalyzes the phosphorolysis of single-stranded polyribonucleotides processively in the 3'- to 5'-direction. This is Polyribonucleotide nucleotidyltransferase from Clostridium botulinum (strain ATCC 19397 / Type A).